The sequence spans 261 residues: Insulin-like growth factor-binding protein-related protein 1 (261 aa).

The N-terminal stretch at 1–17 is a signal peptide; it reads MWIPLLLVALVVPAIRC. One can recognise an IGFBP N-terminal domain in the interval 18–101; it reads ERKCGECNPE…DPPEAMCVCL (84 aa). 8 disulfides stabilise this stretch: C21-C45, C24-C47, C29-C48, C36-C51, C59-C82, C76-C98, C100-C118, and C107-C139. Residues 70–141 form the Kazal-like domain; sequence NRGHGPCGEY…RAMHRGPCKS (72 aa). One can recognise an Ig-like C2-type domain in the interval 143–243; it reads PKITSPPEEA…GESSAAARVV (101 aa). N154 carries an N-linked (GlcNAc...) asparagine glycan. A disulfide bond links C164 and C227.

In terms of tissue distribution, expressed by the venom gland.

It localises to the secreted. This Cupiennius salei (American wandering spider) protein is Insulin-like growth factor-binding protein-related protein 1.